Reading from the N-terminus, the 194-residue chain is Small ribosomal subunit protein uS4c (194 aa).

The region spanning 82-143 (MRLDNILFRL…KQRSKALIQD (62 aa)) is the S4 RNA-binding domain.

The protein belongs to the universal ribosomal protein uS4 family. As to quaternary structure, part of the 30S ribosomal subunit. Contacts protein S5. The interaction surface between S4 and S5 is involved in control of translational fidelity.

Its subcellular location is the plastid. The protein localises to the chloroplast. Its function is as follows. One of the primary rRNA binding proteins, it binds directly to 16S rRNA where it nucleates assembly of the body of the 30S subunit. With S5 and S12 plays an important role in translational accuracy. This chain is Small ribosomal subunit protein uS4c (rps4), found in Bobartia gladiata (Sword rush-lily).